A 397-amino-acid polypeptide reads, in one-letter code: Purine ribonucleoside efflux pump NepI (397 aa).

At 1 to 21 (MNENIAEKFRADGVARPNWSA) the chain is on the cytoplasmic side. A helical membrane pass occupies residues 22–42 (VFAVAFCVACLITVEFLPVSL). Residues 43 to 54 (LTPMAQDLGISE) lie on the Periplasmic side of the membrane. Residues 55–75 (GVAGQSVTVTAFVAMFSSLFI) traverse the membrane as a helical segment. Over 76–85 (TQIIQATDRR) the chain is Cytoplasmic. A helical membrane pass occupies residues 86–106 (YIVILFAVLLTASCLMVSFAN). Position 107 (Ser-107) is a topological domain, periplasmic. A helical membrane pass occupies residues 108–128 (FTLLLLGRACLGLALGGFWAI). Topologically, residues 129–147 (SASLTMRLVPARTVPKALS) are cytoplasmic. Residues 148 to 168 (VIFGAVSIALVIAAPLGSFLG) traverse the membrane as a helical segment. Over 169–175 (GIIGWRN) the chain is Periplasmic. The chain crosses the membrane as a helical span at residues 176–196 (VFNAAAVMGVLCVIWVVKSLP). Over 197–215 (SLPGEPSHQKQNMFSLLQR) the chain is Cytoplasmic. Residues 216 to 236 (PGVMAGMIAIFMSFAGQFAFF) traverse the membrane as a helical segment. Residues 237 to 255 (TYIRPVYMNLAGFDVDGLT) are Periplasmic-facing. A helical transmembrane segment spans residues 256–276 (LVLLSFGIASFVGTSFSSYVL). At 277–281 (KRSVK) the chain is on the cytoplasmic side. Residues 282–302 (LALAGAPLLLALSALTLIVWG) form a helical membrane-spanning segment. Residues 303–305 (SDK) are Periplasmic-facing. The chain crosses the membrane as a helical span at residues 306–326 (TVAAAIAIIWGLAFALVPVGW). Over 327 to 343 (STWITRSLADQAEKAGS) the chain is Cytoplasmic. Residues 344–364 (IQVAVIQLANTCGAAVGGYAL) traverse the membrane as a helical segment. At 365-366 (DN) the chain is on the periplasmic side. A helical membrane pass occupies residues 367–387 (FGLLSPLALSGGLMLLTALVV). Topologically, residues 388-397 (AAKVRITPMS) are cytoplasmic.

Belongs to the major facilitator superfamily. DHA1 family. NepI (TC 2.A.1.2.26) subfamily.

It is found in the cell inner membrane. It carries out the reaction inosine(in) + H(+)(out) = inosine(out) + H(+)(in). It catalyses the reaction guanosine(in) + H(+)(out) = guanosine(out) + H(+)(in). Functionally, involved in the efflux of purine ribonucleosides, such as inosine and guanosine. The polypeptide is Purine ribonucleoside efflux pump NepI (Salmonella paratyphi A (strain ATCC 9150 / SARB42)).